A 99-amino-acid polypeptide reads, in one-letter code: Probable small ribosomal subunit protein cS23 (99 aa).

Belongs to the chloroplast-specific ribosomal protein cS23 family. Part of the 30S ribosomal subunit.

Probably a ribosomal protein or a ribosome-associated protein. This is Probable small ribosomal subunit protein cS23 from Synechococcus sp. (strain JA-3-3Ab) (Cyanobacteria bacterium Yellowstone A-Prime).